The sequence spans 710 residues: Chaperonin-containing T-complex member BBS12 (710 aa).

The protein belongs to the TCP-1 chaperonin family. BBS12 subfamily. Component of the chaperonin-containing T-complex (TRiC), a heterooligomeric complex of about 850 to 900 kDa that forms two stacked rings, 12 to 16 nm in diameter. Interacts with MKKS.

The protein resides in the cell projection. It localises to the cilium. Functionally, component of the chaperonin-containing T-complex (TRiC), a molecular chaperone complex that assists the folding of proteins upon ATP hydrolysis. As part of the TRiC complex may play a role in the assembly of BBSome, a complex involved in ciliogenesis regulating transports vesicles to the cilia. Involved in adipogenic differentiation. The sequence is that of Chaperonin-containing T-complex member BBS12 (BBS12) from Homo sapiens (Human).